The sequence spans 343 residues: Cytosolic Fe-S cluster assembly factor CFD1 (343 aa).

15 to 22 (GKGGVGKS) contacts ATP. Composition is skewed to polar residues over residues 80-91 (PSSDGLNGSQRA) and 99-110 (ESSSSTVETAPQ). The tract at residues 80-110 (PSSDGLNGSQRANKPDDSNESSSSTVETAPQ) is disordered. Positions 241 and 244 each coordinate [4Fe-4S] cluster.

This sequence belongs to the Mrp/NBP35 ATP-binding proteins family. NUBP2/CFD1 subfamily. As to quaternary structure, heterotetramer of 2 NBP35 and 2 CFD1 chains. Requires [4Fe-4S] cluster as cofactor.

Its subcellular location is the cytoplasm. Component of the cytosolic iron-sulfur (Fe/S) protein assembly (CIA) machinery. Required for maturation of extramitochondrial Fe-S proteins. The NBP35-CFD1 heterotetramer forms a Fe-S scaffold complex, mediating the de novo assembly of an Fe-S cluster and its transfer to target apoproteins. This chain is Cytosolic Fe-S cluster assembly factor CFD1, found in Coccidioides immitis (strain RS) (Valley fever fungus).